Consider the following 339-residue polypeptide: Ketol-acid reductoisomerase (NADP(+)) (339 aa).

One can recognise a KARI N-terminal Rossmann domain in the interval 1 to 182; it reads MRVYYDRDAD…GGGRSGVIET (182 aa). NADP(+) contacts are provided by residues 24–27, R48, S51, T53, and 83–86; these read YGSQ and DELQ. The active site involves H108. G134 serves as a coordination point for NADP(+). Residues 183–328 enclose the KARI C-terminal knotted domain; sequence NFREECETDL…GRLRAMMPWI (146 aa). The Mg(2+) site is built by D191, E195, E227, and E231. Substrate is bound at residue S252.

Belongs to the ketol-acid reductoisomerase family. Mg(2+) is required as a cofactor.

The catalysed reaction is (2R)-2,3-dihydroxy-3-methylbutanoate + NADP(+) = (2S)-2-acetolactate + NADPH + H(+). The enzyme catalyses (2R,3R)-2,3-dihydroxy-3-methylpentanoate + NADP(+) = (S)-2-ethyl-2-hydroxy-3-oxobutanoate + NADPH + H(+). The protein operates within amino-acid biosynthesis; L-isoleucine biosynthesis; L-isoleucine from 2-oxobutanoate: step 2/4. It participates in amino-acid biosynthesis; L-valine biosynthesis; L-valine from pyruvate: step 2/4. Functionally, involved in the biosynthesis of branched-chain amino acids (BCAA). Catalyzes an alkyl-migration followed by a ketol-acid reduction of (S)-2-acetolactate (S2AL) to yield (R)-2,3-dihydroxy-isovalerate. In the isomerase reaction, S2AL is rearranged via a Mg-dependent methyl migration to produce 3-hydroxy-3-methyl-2-ketobutyrate (HMKB). In the reductase reaction, this 2-ketoacid undergoes a metal-dependent reduction by NADPH to yield (R)-2,3-dihydroxy-isovalerate. This chain is Ketol-acid reductoisomerase (NADP(+)), found in Phenylobacterium zucineum (strain HLK1).